The primary structure comprises 271 residues: Formamidopyrimidine-DNA glycosylase (271 aa).

Pro2 functions as the Schiff-base intermediate with DNA in the catalytic mechanism. The Proton donor role is filled by Glu3. Lys58 functions as the Proton donor; for beta-elimination activity in the catalytic mechanism. 3 residues coordinate DNA: His91, Arg110, and Arg152. Residues 237–271 (NVYGRGGKACKKCRKPLTEKKLGQRTTVYCTHCQK) form an FPG-type zinc finger. The active-site Proton donor; for delta-elimination activity is the Arg261.

This sequence belongs to the FPG family. In terms of assembly, monomer. Zn(2+) serves as cofactor.

The catalysed reaction is Hydrolysis of DNA containing ring-opened 7-methylguanine residues, releasing 2,6-diamino-4-hydroxy-5-(N-methyl)formamidopyrimidine.. The enzyme catalyses 2'-deoxyribonucleotide-(2'-deoxyribose 5'-phosphate)-2'-deoxyribonucleotide-DNA = a 3'-end 2'-deoxyribonucleotide-(2,3-dehydro-2,3-deoxyribose 5'-phosphate)-DNA + a 5'-end 5'-phospho-2'-deoxyribonucleoside-DNA + H(+). Its function is as follows. Involved in base excision repair of DNA damaged by oxidation or by mutagenic agents. Acts as a DNA glycosylase that recognizes and removes damaged bases. Has a preference for oxidized purines, such as 7,8-dihydro-8-oxoguanine (8-oxoG). Has AP (apurinic/apyrimidinic) lyase activity and introduces nicks in the DNA strand. Cleaves the DNA backbone by beta-delta elimination to generate a single-strand break at the site of the removed base with both 3'- and 5'-phosphates. In Saccharophagus degradans (strain 2-40 / ATCC 43961 / DSM 17024), this protein is Formamidopyrimidine-DNA glycosylase.